Reading from the N-terminus, the 551-residue chain is MSGGDGRGHNTGAHSTSGNINGGPTGLGVGGGASDGSGWSSENNPWGGGSGSGIHWGGGSGHGNGGGNGNSGGGSGTGGNLSAVAAPVAFGFPALSTPGAGGLAVSISAGALSAAIADIMAALKGPFKFGLWGVALYGVLPSQIAKDDPNMMSKIVTSLPADDITESPVSSLPLDKATVNVNVRVVDDVKDERQNISVVSGVPMSVPVVDAKPTERPGVFTASIPGAPVLNISVNNSTPAVQTLSPGVTNNTDKDVRPAGFTQGGNTRDAVIRFPKDSGHNAVYVSVSDVLSPDQVKQRQDEENRRQQEWDATHPVEAAERNYERARAELNQANEDVARNQERQAKAVQVYNSRKSELDAANKTLADAIAEIKQFNRFAHDPMAGGHRMWQMAGLKAQRAQTDVNNKQAAFDAAAKEKSDADAALSSAMESRKKKEDKKRSAENNLNDEKNKPRKGFKDYGHDYHPAPKTENIKGLGDLKPGIPKTPKQNGGGKRKRWTGDKGRKIYEWDSQHGELEGYRASDGQHLGSFDPKTGNQLKGPDPKRNIKKYL.

Disordered stretches follow at residues 1 to 74 (MSGG…SGGG), 243 to 269 (TLSP…NTRD), and 293 to 320 (PDQV…EAAE). Residues 1-315 (MSGGDGRGHN…RQQEWDATHP (315 aa)) form a translocation (T) domain region. The segment covering 20-35 (INGGPTGLGVGGGASD) has biased composition (gly residues). The Binds to TolB signature appears at 35–39 (DGSGW). Low complexity predominate over residues 36 to 45 (GSGWSSENNP). Positions 46–74 (WGGGSGSGIHWGGGSGHGNGGGNGNSGGG) are enriched in gly residues. Over residues 296-320 (VKQRQDEENRRQQEWDATHPVEAAE) the composition is skewed to basic and acidic residues. The stretch at 316 to 378 (VEAAERNYER…IAEIKQFNRF (63 aa)) forms a coiled coil. The receptor-binding (R) domain stretch occupies residues 316-450 (VEAAERNYER…SAENNLNDEK (135 aa)). The short motif at 379-385 (AHDPMAG) is the Hairpin element. A coiled-coil region spans residues 386–450 (GHRMWQMAGL…SAENNLNDEK (65 aa)). A disordered region spans residues 406-505 (NKQAAFDAAA…KRWTGDKGRK (100 aa)). The span at 430–472 (ESRKKKEDKKRSAENNLNDEKNKPRKGFKDYGHDYHPAPKTEN) shows a compositional bias: basic and acidic residues. Residues 451 to 456 (NKPRKG) form a linker region. The ribosome inactivating activity stretch occupies residues 455 to 551 (KGFKDYGHDY…DPKRNIKKYL (97 aa)). The segment at 457–551 (FKDYGHDYHP…DPKRNIKKYL (95 aa)) is cytotoxic RNase (C) domain. The active-site Proton donor is the His513. Glu517 serves as the catalytic Proton acceptor. The segment at 517-551 (EGYRASDGQHLGSFDPKTGNQLKGPDPKRNIKKYL) is disordered. Residues 530–551 (FDPKTGNQLKGPDPKRNIKKYL) form a binding of immunity protein region. Arg545 is a catalytic residue.

This sequence belongs to the cloacin colicin family. Native colicin E3 is a 1:1 complex of A chain and protein B (cognate immunity protein, Im3); protein A is 1,000-fold more active in inactivating ribosomes than the native complex. The cytotoxic fragment (residues 456-551, C95) forms a 1:1 complex with Im3. The receptor-binding (R) domain binds obliquely to its receptor BtuB without displacing BtuB's central plug; binding unfolds the R domain. The N-terminal 83 residues (T83) bind OmpF; trimeric complexes with colicin E3, BtuB and OmpF can be cross-linked and immunoprecipitated. Probably inserts into the OmpF pore as an unfolded peptide and spans the OmpF pore. In a complex with T.thermophilus 70S ribosomes, cytotoxic fragment C96 contacts 16S rRNA, 23S rRNA, mRNA, P-site tRNA and ribosomal protein uS12.

The protein resides in the secreted. Its function is as follows. Colicins are polypeptide toxins produced by and active against E.coli and closely related bacteria. Cleaves 16S rRNA between adenosine-1492 and guanosine-1493 (E.coli 16S rRNA numbering), releasing a 49 nucleotide (nt) 'colicin' fragment. Inactivates 70S ribosomes or 30S subunits by endonucleolytically cleaving 16S RNA at a specific site about 50 nt from its C-terminus. Produces 5'-OH-guanosine and a 2',3'-cyclic phosphate adenosine. Mixing a susceptible (e.g. strain K12 / A19) and colicin E3 producing strain results in total protein translation inhibition within 11 minutes. Its activity is inhibited by cognate immunity protein Im3. In terms of biological role, uses BtuB, the vitamin B transporter, as a receptor on the outer membrane; binds via the receptor (R) domain. Then the translocation domain (T) probably 'fishes' for its outer membrane translocon protein, OmpF. The N-terminal 83 residues (T83) can bind to and occlude OmpF channels. A complex of the cytotoxic C-terminal 96 residues (C96) plus the immunity protein does not occlude OmpF; upon complex separation from the immunity protein C96 becomes disordered and is able to bind OmpF. The N-terminus probably binds TolB and then reinserts into an empty pore of trimeric OmpF; the rest of the protein is pulled through OmpF and crosses the inner membrane, where the cytotoxic fragment is probably released by protease FtsH. This is Colicin E3 (ceaC) from Escherichia coli.